Reading from the N-terminus, the 168-residue chain is Photosystem I assembly protein Ycf3 (168 aa).

TPR repeat units lie at residues 35 to 68 (AFTY…EIDP), 72 to 105 (SYIL…NPFL), and 120 to 153 (GEEA…TPGN).

Belongs to the Ycf3 family.

It localises to the plastid. It is found in the chloroplast thylakoid membrane. Essential for the assembly of the photosystem I (PSI) complex. May act as a chaperone-like factor to guide the assembly of the PSI subunits. In Nuphar advena (Common spatterdock), this protein is Photosystem I assembly protein Ycf3.